The sequence spans 671 residues: MESIEQQLTELRTTLRHHEYLYHVMDAPEIPDAEYDRLMRELRELETKHPELITPDSPTQRVGAAPLAAFSQIRHEVPMLSLDNVFDEESFLAFNKRVQDRLKSNEKVTWCCELKLDGLAVSILYENGVLVSAATRGDGTTGEDITSNVRTIRAIPLKLHGENIPARLEVRGEVFLPQAGFEKINEDARRTGGKVFANPRNAAAGSLRQLDPRITAKRPLTFFCYGVGVLEGGELPDTHLGRLLQFKKWGLPVSDRVTLCESAEEVLAFYHKVEEDRPTLGFDIDGVVIKINSLAQQEQLGFVARAPRWAVAFKFPAQEQMTFVRDVEFQVGRTGAITPVARLEPVHVAGVLVSNATLHNADEIERLGLRIGDKVVIRRAGDVIPQVVNVVLSERPEDTREVVFPTHCPVCGSDVERVEGEAVARCTGGLICGAQRKESLKHFVSRRAMDVDGMGDKIIDQLVEKEYVHTPADLFKLTAGKLTGLERMGPKSAQNVVNALEKAKETTFARFLYALGIREVGEATAAGLAAYFGTLEALEAASIEELQKVPDVGIVVASHVHNFFAEESNRNVISELLAEGVHWPAPVVINAEEIDSPFAGKTVVLTGSLSQMSRDDAKARLVELGAKVAGSVSKKTDLVIAGEAAGSKLAKAQELGIEVIDEAEMLRLLGS.

Residues 32-36 (DAEYD), 81-82 (SL), and Glu-113 contribute to the NAD(+) site. The active-site N6-AMP-lysine intermediate is Lys-115. Positions 136, 173, 290, and 314 each coordinate NAD(+). Zn(2+) is bound by residues Cys-408, Cys-411, Cys-426, and Cys-432. In terms of domain architecture, BRCT spans 593–671 (EIDSPFAGKT…EAEMLRLLGS (79 aa)).

The protein belongs to the NAD-dependent DNA ligase family. LigA subfamily. Requires Mg(2+) as cofactor. Mn(2+) serves as cofactor.

The catalysed reaction is NAD(+) + (deoxyribonucleotide)n-3'-hydroxyl + 5'-phospho-(deoxyribonucleotide)m = (deoxyribonucleotide)n+m + AMP + beta-nicotinamide D-nucleotide.. In terms of biological role, DNA ligase that catalyzes the formation of phosphodiester linkages between 5'-phosphoryl and 3'-hydroxyl groups in double-stranded DNA using NAD as a coenzyme and as the energy source for the reaction. It is essential for DNA replication and repair of damaged DNA. This chain is DNA ligase, found in Escherichia coli O7:K1 (strain IAI39 / ExPEC).